A 463-amino-acid chain; its full sequence is Argininosuccinate lyase (463 aa).

This sequence belongs to the lyase 1 family. Argininosuccinate lyase subfamily.

The protein resides in the cytoplasm. It carries out the reaction 2-(N(omega)-L-arginino)succinate = fumarate + L-arginine. It participates in amino-acid biosynthesis; L-arginine biosynthesis; L-arginine from L-ornithine and carbamoyl phosphate: step 3/3. This Methylorubrum populi (strain ATCC BAA-705 / NCIMB 13946 / BJ001) (Methylobacterium populi) protein is Argininosuccinate lyase.